The primary structure comprises 299 residues: GTPase Era (299 aa).

The Era-type G domain occupies 5–172 (KSGFVSIIGR…IDVLKTYLPE (168 aa)). The interval 13–20 (GRPNVGKS) is G1. 13–20 (GRPNVGKS) is a GTP binding site. Residues 39 to 43 (QTTRN) are G2. The interval 60-63 (DTPG) is G3. GTP-binding positions include 60–64 (DTPGI) and 122–125 (NKID). The segment at 122-125 (NKID) is G4. The segment at 151 to 153 (ISA) is G5. Residues 203–280 (TSEEIPHAIG…YLELWVKVQR (78 aa)) enclose the KH type-2 domain.

This sequence belongs to the TRAFAC class TrmE-Era-EngA-EngB-Septin-like GTPase superfamily. Era GTPase family. As to quaternary structure, monomer.

Its subcellular location is the cytoplasm. The protein localises to the cell membrane. An essential GTPase that binds both GDP and GTP, with rapid nucleotide exchange. Plays a role in 16S rRNA processing and 30S ribosomal subunit biogenesis and possibly also in cell cycle regulation and energy metabolism. The protein is GTPase Era of Staphylococcus aureus (strain NCTC 8325 / PS 47).